A 71-amino-acid chain; its full sequence is MQRMEEIAFKALNRVNNDRYLLANILFARIDELSKGAKPLVNMDVKKHKLTDIAMTEVAEGKIALSQIDQL.

It belongs to the RNA polymerase subunit omega family. The RNAP catalytic core consists of 2 alpha, 1 beta/beta' and 1 omega subunit. When a sigma factor is associated with the core the holoenzyme is formed, which can initiate transcription.

The catalysed reaction is RNA(n) + a ribonucleoside 5'-triphosphate = RNA(n+1) + diphosphate. Its function is as follows. Promotes RNA polymerase assembly. Latches the N- and C-terminal regions of the beta' subunit thereby facilitating its interaction with the beta and alpha subunits. In Wolinella succinogenes (strain ATCC 29543 / DSM 1740 / CCUG 13145 / JCM 31913 / LMG 7466 / NCTC 11488 / FDC 602W) (Vibrio succinogenes), this protein is DNA-directed RNA polymerase subunit omega.